A 121-amino-acid polypeptide reads, in one-letter code: MARIAGINIPPQKHAEIGLTAIFGIGRTRARKICEACEIDYAKKIKDLTDSDLEKIRDHIAQFTIEGDLRRETTMNIKRLMDIGCYRGFRHRRGLPMRGQRTRTNARTRKGPRKAAASLKK.

Positions 95–121 (LPMRGQRTRTNARTRKGPRKAAASLKK) are disordered.

It belongs to the universal ribosomal protein uS13 family. Part of the 30S ribosomal subunit. Forms a loose heterodimer with protein S19. Forms two bridges to the 50S subunit in the 70S ribosome.

Located at the top of the head of the 30S subunit, it contacts several helices of the 16S rRNA. In the 70S ribosome it contacts the 23S rRNA (bridge B1a) and protein L5 of the 50S subunit (bridge B1b), connecting the 2 subunits; these bridges are implicated in subunit movement. Contacts the tRNAs in the A and P-sites. This is Small ribosomal subunit protein uS13 from Polaromonas naphthalenivorans (strain CJ2).